Consider the following 630-residue polypeptide: 1-deoxy-D-xylulose-5-phosphate synthase (630 aa).

Residues H87 and 128 to 130 (GHS) each bind thiamine diphosphate. D159 is a Mg(2+) binding site. Residues 160-161 (GA), N188, F295, and E377 each bind thiamine diphosphate. N188 is a Mg(2+) binding site.

This sequence belongs to the transketolase family. DXPS subfamily. As to quaternary structure, homodimer. Mg(2+) is required as a cofactor. The cofactor is thiamine diphosphate.

It carries out the reaction D-glyceraldehyde 3-phosphate + pyruvate + H(+) = 1-deoxy-D-xylulose 5-phosphate + CO2. It functions in the pathway metabolic intermediate biosynthesis; 1-deoxy-D-xylulose 5-phosphate biosynthesis; 1-deoxy-D-xylulose 5-phosphate from D-glyceraldehyde 3-phosphate and pyruvate: step 1/1. Its function is as follows. Catalyzes the acyloin condensation reaction between C atoms 2 and 3 of pyruvate and glyceraldehyde 3-phosphate to yield 1-deoxy-D-xylulose-5-phosphate (DXP). In Pseudomonas syringae pv. syringae (strain B728a), this protein is 1-deoxy-D-xylulose-5-phosphate synthase.